Consider the following 359-residue polypeptide: Probable tyrosine-protein phosphatase pir-2 (359 aa).

A Tyrosine-protein phosphatase domain is found at 16 to 191; that stretch reads QPVGNVIPRT…AKDKRDKQVD (176 aa). C131 functions as the Phosphocysteine intermediate in the catalytic mechanism. Positions 184–199 are enriched in basic and acidic residues; it reads DKRDKQVDSDSDSSER. Disordered stretches follow at residues 184 to 211, 234 to 259, and 274 to 328; these read DKRD…KHRE, SVSG…PHHW, and PVAN…RNRM. Residues 200–210 are compositionally biased toward basic residues; the sequence is QRKKKNKRKHR. Polar residues predominate over residues 234 to 246; it reads SVSGTDYQNSPNG. Acidic residues predominate over residues 290-309; that stretch reads PQEEEEFEEDFEEIEEETET. Over residues 319–328 the composition is skewed to basic residues; the sequence is SKRRARRNRM.

Belongs to the protein-tyrosine phosphatase family. Non-receptor class CDC14 subfamily.

It catalyses the reaction O-phospho-L-tyrosyl-[protein] + H2O = L-tyrosyl-[protein] + phosphate. This chain is Probable tyrosine-protein phosphatase pir-2, found in Caenorhabditis elegans.